Reading from the N-terminus, the 430-residue chain is F-box protein At1g49990 (430 aa).

Residues 1-45 form the F-box domain; sequence METGRRRTIPEVEILARLPLRSIARFKSVCKRWKSVIESDYFRRL.

The protein is F-box protein At1g49990 of Arabidopsis thaliana (Mouse-ear cress).